Reading from the N-terminus, the 442-residue chain is D-serine dehydratase (442 aa).

The residue at position 118 (K118) is an N6-(pyridoxal phosphate)lysine.

This sequence belongs to the serine/threonine dehydratase family. DsdA subfamily. In terms of assembly, monomer. Pyridoxal 5'-phosphate serves as cofactor.

It catalyses the reaction D-serine = pyruvate + NH4(+). The polypeptide is D-serine dehydratase (Citrobacter koseri (strain ATCC BAA-895 / CDC 4225-83 / SGSC4696)).